The primary structure comprises 328 residues: MSDTQISSFLRKYLADEDRKIRAQFKESDPKNKLILWMHEKTRITEDDLKRPYTKDEVRELCLRTKVKVDMTAWNCLWEAKKRFDAKGRFENKSEKFINRMYMKAVRRKMVQPYPEEYVAQRREVIAAETKKFNISRLDRWQKQKSQNRSAPESSSALVGHASQQDSQDNEAVETHEDQANTNRYSVSQMEPMARPVVSASDLSGIGDDEDEQQQQQSEFQTEHTDCPETQMRCDQINSGSLPMGLTNSESAPDYYMFGTQLSTSVRPTSTQEADDQIACPETETNESWVRCDQINSESMSIGPSIDSEGNISLQNSGSEPIDVDSMA.

The interval 107-320 (RRKMVQPYPE…NISLQNSGSE (214 aa)) is required for binding to Su(var)205. The interval 139-228 (DRWQKQKSQN…EFQTEHTDCP (90 aa)) is disordered. Composition is skewed to polar residues over residues 144–167 (QKSQ…QQDS) and 180–189 (ANTNRYSVSQ). 2 short sequence motifs (su(var)205-binding Pro-containing repeat) span residues 228-232 (PETQM) and 281-287 (PETETNE). A compositionally biased stretch (polar residues) spans 295-319 (INSESMSIGPSIDSEGNISLQNSGS). Residues 295–328 (INSESMSIGPSIDSEGNISLQNSGSEPIDVDSMA) are disordered.

In terms of assembly, interacts (via C-terminus) with Su(var)205 dimer (via hinge and chromoshadow domain) and with moi to form the terminin, telomere-capping, complex. Interacts with HP6, which is also part of the terminin complex.

It is found in the nucleus. It localises to the chromosome. The protein resides in the telomere. Its function is as follows. Binds to chromosome ends in a sequence-dependent manner and is required for telomere capping. This chain is Telomere-binding protein cav, found in Drosophila erecta (Fruit fly).